Reading from the N-terminus, the 94-residue chain is Ig kappa-B5 chain V region 2699 (94 aa).

Residues 1 to 23 (AFELTQTPSSVEAAVGGTVTINC) are framework-1. Residues 24–34 (QASTDISSNLA) are complementarity-determining-1. The framework-2 stretch occupies residues 35–49 (WYTPKPGSPPKLLIY). The tract at residues 50-56 (SASTLAS) is complementarity-determining-2. The interval 57–82 (GVSSRFKGSGSGVLITLTISDLECGV) is framework-3. Residue Ser-83 is a region of interest, complementarity-determining-3. Residues 84–93 (FGGGTKVVVE) form a framework-4 region.

The polypeptide is Ig kappa-B5 chain V region 2699 (Oryctolagus cuniculus (Rabbit)).